The sequence spans 160 residues: Variant surface antigen C (160 aa).

The first 29 residues, 1–29, serve as a signal peptide directing secretion; sequence MKKSIFSKKLLVSFGSLVALASIPLIAIS. Residue Cys30 is the site of N-palmitoyl cysteine attachment. Cys30 is lipidated: S-diacylglycerol cysteine. Residues 32-160 are disordered; it reads QTNTDKSQQP…SSESGSQKTT (129 aa). Composition is skewed to low complexity over residues 38–54 and 62–87; these read SQQPGSGSSTSGDQSGT and SGTSTSGGQSGTTSGSGTTTGEQTET. Repeat copies occupy residues 86 to 97, 98 to 109, 110 to 121, 122 to 133, 134 to 145, and 146 to 157. The interval 86–157 is 6 X 12 AA tandem repeats; that stretch reads ETAPKSPESG…APKSSESGSQ (72 aa). A compositionally biased stretch (polar residues) spans 93-160; it reads ESGSQEATPK…SSESGSQKTT (68 aa).

The protein resides in the cell membrane. In terms of biological role, responsible for the antigenic diversity for host adaptation. This chain is Variant surface antigen C (vlpC), found in Mesomycoplasma hyorhinis (Mycoplasma hyorhinis).